The chain runs to 150 residues: Cytochrome c oxidase subunit 5A, mitochondrial (150 aa).

Residues 1-41 (MLGAALRRCAVAATTWAGPRGLLHSARTPGPAAAIQSVRCY) constitute a mitochondrion transit peptide. Positions 2–17 (LGAALRRCAVAATTWA) match the SIFI-degron motif. N6-acetyllysine is present on residues Lys87 and Lys113. A Phosphothreonine modification is found at Thr141.

It belongs to the cytochrome c oxidase subunit 5A family. Component of the cytochrome c oxidase (complex IV, CIV), a multisubunit enzyme composed of 14 subunits. The complex is composed of a catalytic core of 3 subunits MT-CO1, MT-CO2 and MT-CO3, encoded in the mitochondrial DNA, and 11 supernumerary subunits COX4I, COX5A, COX5B, COX6A, COX6B, COX6C, COX7A, COX7B, COX7C, COX8 and NDUFA4, which are encoded in the nuclear genome. The complex exists as a monomer or a dimer and forms supercomplexes (SCs) in the inner mitochondrial membrane with NADH-ubiquinone oxidoreductase (complex I, CI) and ubiquinol-cytochrome c oxidoreductase (cytochrome b-c1 complex, complex III, CIII), resulting in different assemblies (supercomplex SCI(1)III(2)IV(1) and megacomplex MCI(2)III(2)IV(2)). Interacts with AFG1L. Interacts with RAB5IF. In response to mitochondrial stress, the precursor protein is ubiquitinated by the SIFI complex in the cytoplasm before mitochondrial import, leading to its degradation. Within the SIFI complex, UBR4 initiates ubiquitin chain that are further elongated or branched by KCMF1.

It localises to the mitochondrion inner membrane. It functions in the pathway energy metabolism; oxidative phosphorylation. Its function is as follows. Component of the cytochrome c oxidase, the last enzyme in the mitochondrial electron transport chain which drives oxidative phosphorylation. The respiratory chain contains 3 multisubunit complexes succinate dehydrogenase (complex II, CII), ubiquinol-cytochrome c oxidoreductase (cytochrome b-c1 complex, complex III, CIII) and cytochrome c oxidase (complex IV, CIV), that cooperate to transfer electrons derived from NADH and succinate to molecular oxygen, creating an electrochemical gradient over the inner membrane that drives transmembrane transport and the ATP synthase. Cytochrome c oxidase is the component of the respiratory chain that catalyzes the reduction of oxygen to water. Electrons originating from reduced cytochrome c in the intermembrane space (IMS) are transferred via the dinuclear copper A center (CU(A)) of subunit 2 and heme A of subunit 1 to the active site in subunit 1, a binuclear center (BNC) formed by heme A3 and copper B (CU(B)). The BNC reduces molecular oxygen to 2 water molecules using 4 electrons from cytochrome c in the IMS and 4 protons from the mitochondrial matrix. In Papio anubis (Olive baboon), this protein is Cytochrome c oxidase subunit 5A, mitochondrial (COX5A).